We begin with the raw amino-acid sequence, 330 residues long: 2-alkyl-3-oxoalkanoate reductase (330 aa).

The active-site Proton acceptor is the Tyr-139. Position 143 (Lys-143) interacts with NADP(+).

The protein belongs to the 3-beta-HSD family. As to quaternary structure, homodimer.

The enzyme catalyses a (2R,3S)-2-alkyl-3-hydroxyalkanoate + NADP(+) = an (R)-2-alkyl-3-oxoalkanoate + NADPH + H(+). Involved in olefin biosynthesis. Catalyzes the reversible stereospecific NADPH-dependent reduction of 2-alkyl-3-oxoalkanoic acids to 2-alkyl-3-hydroxyalkanoic acids. In the oxidative direction, syn-2-decyl-3-hydroxytetradecanoic acid is the preferred substrate. In the reductive direction, (2R/S)-2-hexyl-3-ketodecanoic acid is accepted as substrate. The chain is 2-alkyl-3-oxoalkanoate reductase from Stenotrophomonas maltophilia (strain K279a).